The primary structure comprises 514 residues: MSSPDKVSVCGAGFDLEGGKKAGSRTASPGAPGAHSHGLDLGVPGSGDGKSESGFTDPEGFSFESESELIEQGRVVLWGREGRPGTPVDDQGDVVDYSFYLADEPAAIVPPPSVQGHPFPEGAAAEGSAENWADAEVGPSGRDVLGHSPGKWQQASAGRLHLCGPGPVRAWKNPERGSKSRWSLRVDPQQPSAKGPTRLPTHDSDSADESSDLPLMKVGICRNEGSQAKPGSPKKRADTSRQASFHCKESYLPVPGRFLTSAPRGLTPVAERPAVGELEDSPQKKMQSRAWGKVEVRPSCSGAAAAGALPQGLSRRKMAGGKKSLGGASQLALGRGFPACGERLSAAPPEPATFPPFSGVRPQGMSKKPQKPKHSSPGKKPAGRKTRESQAAAREDNDPNRDEVPRAQLPTHRPGLPRLSVRRGEFSSSDPNIRAPQLPGTSEPSAYSPGGLVPRRHAPSGNQQPPVHPPRPERQQQPPGAQGCPRCIWLQREIEDLTQQLAAMQFLTDKFQDL.

3 disordered regions span residues 1-68 (MSSP…SESE), 109-244 (VPPP…RQAS), and 272-484 (RPAV…AQGC). Residues 368-384 (KPQKPKHSSPGKKPAGR) are compositionally biased toward basic residues. Over residues 385–405 (KTRESQAAAREDNDPNRDEVP) the composition is skewed to basic and acidic residues.

This is an uncharacterized protein from Homo sapiens (Human).